A 127-amino-acid chain; its full sequence is Aspartate 1-decarboxylase (127 aa).

Residue Ser-25 is the Schiff-base intermediate with substrate; via pyruvic acid of the active site. Ser-25 carries the post-translational modification Pyruvic acid (Ser). Thr-57 contributes to the substrate binding site. Residue Tyr-58 is the Proton donor of the active site. Residue 73-75 participates in substrate binding; sequence GAA.

Belongs to the PanD family. Heterooctamer of four alpha and four beta subunits. Pyruvate is required as a cofactor. In terms of processing, is synthesized initially as an inactive proenzyme, which is activated by self-cleavage at a specific serine bond to produce a beta-subunit with a hydroxyl group at its C-terminus and an alpha-subunit with a pyruvoyl group at its N-terminus.

The protein localises to the cytoplasm. It carries out the reaction L-aspartate + H(+) = beta-alanine + CO2. It functions in the pathway cofactor biosynthesis; (R)-pantothenate biosynthesis; beta-alanine from L-aspartate: step 1/1. Functionally, catalyzes the pyruvoyl-dependent decarboxylation of aspartate to produce beta-alanine. The sequence is that of Aspartate 1-decarboxylase from Bacillus cereus (strain G9842).